Consider the following 37-residue polypeptide: Cytochrome b6-f complex subunit 5 (37 aa).

The helical transmembrane segment at 5-25 (FLFGIVLGLIPITLTGLFVTA) threads the bilayer.

It belongs to the PetG family. In terms of assembly, the 4 large subunits of the cytochrome b6-f complex are cytochrome b6, subunit IV (17 kDa polypeptide, PetD), cytochrome f and the Rieske protein, while the 4 small subunits are PetG, PetL, PetM and PetN. The complex functions as a dimer.

It is found in the plastid. Its subcellular location is the chloroplast thylakoid membrane. Component of the cytochrome b6-f complex, which mediates electron transfer between photosystem II (PSII) and photosystem I (PSI), cyclic electron flow around PSI, and state transitions. PetG is required for either the stability or assembly of the cytochrome b6-f complex. The sequence is that of Cytochrome b6-f complex subunit 5 from Phalaenopsis aphrodite subsp. formosana (Moth orchid).